Consider the following 226-residue polypeptide: MNPIVMKKLQKFIGYTFTNITLLKHALTHRSASSQHNERLEFLGDSILSFIIAKALYHHFPKMNEGGMSRMRATLVRGNTLAEIATEFSLGKYLQLGQGEKKSGGFKRESILANAIEAIIASIFLDSNIYTVERIILYWYKNRFKKMNPTGTKKDPKTRLQEYLQSKHFSLPIYSIGQIYGEAHNQIFTIYCKIDGLSELLIGIGASRRKAEQDAAQNALIRLEVE.

Residues 6–128 enclose the RNase III domain; the sequence is MKKLQKFIGY…IIASIFLDSN (123 aa). Residue Glu-41 coordinates Mg(2+). Residue Asp-45 is part of the active site. 2 residues coordinate Mg(2+): Asn-114 and Glu-117. Glu-117 is an active-site residue. The DRBM domain occupies 155–225; that stretch reads DPKTRLQEYL…AQNALIRLEV (71 aa).

It belongs to the ribonuclease III family. As to quaternary structure, homodimer. Requires Mg(2+) as cofactor.

The protein localises to the cytoplasm. The catalysed reaction is Endonucleolytic cleavage to 5'-phosphomonoester.. In terms of biological role, digests double-stranded RNA. Involved in the processing of primary rRNA transcript to yield the immediate precursors to the large and small rRNAs (23S and 16S). Processes some mRNAs, and tRNAs when they are encoded in the rRNA operon. Processes pre-crRNA and tracrRNA of type II CRISPR loci if present in the organism. In Buchnera aphidicola subsp. Cinara cedri (strain Cc), this protein is Ribonuclease 3.